We begin with the raw amino-acid sequence, 37 residues long: Brevinin-2DYe (37 aa).

A disulfide bond links cysteine 31 and cysteine 37.

Expressed by the skin glands.

It is found in the secreted. Antimicrobial peptide. Active against the Gram-positive bacterium S.aureus (MIC=15 uM) and the Gram-negative bacterium E.coli (MIC=30 uM). This chain is Brevinin-2DYe, found in Rana dybowskii (Dybovsky's frog).